The primary structure comprises 240 residues: MDPRKVNELRAFVKMCKKDPSILHTQEMRFLREWVESMGGTATQKAKSEENTKEEKPDSKVEEDLKADEPSSEESDLEIDKEGVIEPDTDAPQEMGDENAEITEEVMDQANDKKVAAIEALNDGELQKAIDLFTDAIKLNPRLAILYAKRASVFVKLQKPNAAIRDCDRAIEINPDSAQPYKRRGKAHRLLGHWEEAAHDLALACKFDYDEDASAMLKEVQPRAQKIAEHQRKYERKREE.

The segment at 38–94 (MGGTATQKAKSEENTKEEKPDSKVEEDLKADEPSSEESDLEIDKEGVIEPDTDAPQE) is disordered. A compositionally biased stretch (basic and acidic residues) spans 46–69 (AKSEENTKEEKPDSKVEEDLKADE). A compositionally biased stretch (acidic residues) spans 85–94 (IEPDTDAPQE). TPR repeat units follow at residues 110–143 (ANDKKVAAIEALNDGELQKAIDLFTDAIKLNPRL), 145–177 (ILYAKRASVFVKLQKPNAAIRDCDRAIEINPDS), and 179–211 (QPYKRRGKAHRLLGHWEEAAHDLALACKFDYDE). A disordered region spans residues 220-240 (VQPRAQKIAEHQRKYERKREE). Basic and acidic residues predominate over residues 226 to 240 (KIAEHQRKYERKREE).

Belongs to the FAM10 family. In terms of tissue distribution, highly expressed in bone marrow and weakly in placenta, pancreas, heart and HeLa cell line.

The protein resides in the cytoplasm. The protein is Putative protein FAM10A4 (ST13P4) of Homo sapiens (Human).